Consider the following 123-residue polypeptide: Histone H2B (123 aa).

A disordered region spans residues 1–31; that stretch reads MPPKTSGKAAKKAGKAQKNITKNDKKKKRKR. Pro-2 carries the post-translational modification N-methylproline; partial. Lys-44 carries the N6-succinyllysine modification. O-linked (GlcNAc) serine glycosylation is present at Ser-110. An N6-succinyllysine mark is found at Lys-114 and Lys-118. Lys-118 participates in a covalent cross-link: Glycyl lysine isopeptide (Lys-Gly) (interchain with G-Cter in ubiquitin).

The protein belongs to the histone H2B family. In terms of assembly, the nucleosome is a histone octamer containing two molecules each of H2A, H2B, H3 and H4 assembled in one H3-H4 heterotetramer and two H2A-H2B heterodimers. The octamer wraps approximately 147 bp of DNA. Post-translationally, phosphorylated by the catalytic component of the Dbf4-dependent kinase (DDK) complex Cdc7. In terms of processing, monoubiquitination of Lys-118 by Bre1 gives a specific tag for epigenetic transcriptional activation and is also prerequisite for histone H3 'Lys-4' and 'Lys-79' methylation. Deubiquitination of Lys-118 by the SAGA complex is involved in activating transcription of a large subset of genes. Methylation at Pro-2 increases upon heat shock. Post-translationally, glcNAcylation at Ser-110 promotes monoubiquitination of Lys-118. It fluctuates in response to extracellular glucose, and associates with transcribed genes.

It localises to the nucleus. The protein localises to the chromosome. Core component of nucleosome. Nucleosomes wrap and compact DNA into chromatin, limiting DNA accessibility to the cellular machineries which require DNA as a template. Histones thereby play a central role in transcription regulation, DNA repair, DNA replication and chromosomal stability. DNA accessibility is regulated via a complex set of post-translational modifications of histones, also called histone code, and nucleosome remodeling. The protein is Histone H2B (His2B) of Drosophila sechellia (Fruit fly).